The following is a 607-amino-acid chain: Fucose-1-phosphate guanylyltransferase (607 aa).

The tract at residues 1–21 is disordered; sequence MRAVRRGLREGGAMAAARDPP.

In terms of tissue distribution, expressed in many tissues.

Its subcellular location is the cytoplasm. The catalysed reaction is beta-L-fucose 1-phosphate + GTP + H(+) = GDP-beta-L-fucose + diphosphate. In terms of biological role, catalyzes the formation of GDP-L-fucose from GTP and L-fucose-1-phosphate. Functions as a salvage pathway to reutilize L-fucose arising from the turnover of glycoproteins and glycolipids. The protein is Fucose-1-phosphate guanylyltransferase of Homo sapiens (Human).